A 150-amino-acid polypeptide reads, in one-letter code: 3-dehydroquinate dehydratase (150 aa).

The active-site Proton acceptor is the tyrosine 23. Positions 79, 85, and 92 each coordinate substrate. The active-site Proton donor is histidine 105. Substrate is bound by residues 106-107 and arginine 116; that span reads IS.

Belongs to the type-II 3-dehydroquinase family. Homododecamer.

It carries out the reaction 3-dehydroquinate = 3-dehydroshikimate + H2O. The protein operates within metabolic intermediate biosynthesis; chorismate biosynthesis; chorismate from D-erythrose 4-phosphate and phosphoenolpyruvate: step 3/7. Functionally, catalyzes a trans-dehydration via an enolate intermediate. In Marinomonas sp. (strain MWYL1), this protein is 3-dehydroquinate dehydratase.